The sequence spans 848 residues: Adenylate cyclase (848 aa).

The catalytic stretch occupies residues 1–535 (MYLYIETLKQ…DVSHHFPLRL (535 aa)). Residues 541–848 (KALYSPCEIR…DAPLLQQYFS (308 aa)) are regulatory. Position 609 is a phosphohistidine; by CRR (His609).

The protein belongs to the adenylyl cyclase class-1 family.

Its subcellular location is the cytoplasm. It carries out the reaction ATP = 3',5'-cyclic AMP + diphosphate. The chain is Adenylate cyclase (cyaA) from Escherichia coli O6:H1 (strain CFT073 / ATCC 700928 / UPEC).